A 201-amino-acid chain; its full sequence is Probable cytokinin riboside 5'-monophosphate phosphoribohydrolase LOG6 (201 aa).

Substrate contacts are provided by residues Glu89, 107-108 (RK), 124-130 (GYGTLEE), and Thr136.

This sequence belongs to the LOG family.

The catalysed reaction is N(6)-(dimethylallyl)adenosine 5'-phosphate + H2O = N(6)-dimethylallyladenine + D-ribose 5-phosphate. The enzyme catalyses 9-ribosyl-trans-zeatin 5'-phosphate + H2O = trans-zeatin + D-ribose 5-phosphate. Functionally, cytokinin-activating enzyme working in the direct activation pathway. Phosphoribohydrolase that converts inactive cytokinin nucleotides to the biologically active free-base forms. The protein is Probable cytokinin riboside 5'-monophosphate phosphoribohydrolase LOG6 (LOG6) of Arabidopsis thaliana (Mouse-ear cress).